The following is an 85-amino-acid chain: Large ribosomal subunit protein bL27 (85 aa).

The tract at residues 1–21 (MAHKKAGGSTRNGRDSESKRL) is disordered.

This sequence belongs to the bacterial ribosomal protein bL27 family.

This Pseudomonas entomophila (strain L48) protein is Large ribosomal subunit protein bL27.